A 190-amino-acid chain; its full sequence is Homeobox protein SEBOX (190 aa).

Residues 1 to 11 are compositionally biased toward low complexity; it reads MPSPVDASSAD. Disordered stretches follow at residues 1 to 24 and 82 to 161; these read MPSP…RKRT and ILSP…VHPS. Residues 19-78 constitute a DNA-binding region (homeobox); the sequence is HRRKRTTFSKGQLLELERAFAAWPYPNISTHEHLAWVTCLPEAKVQVWFQKRWAKIIKNR. Polar residues predominate over residues 89-100; that stretch reads CPQSSCSLPDTL.

It belongs to the paired homeobox family.

It is found in the nucleus. Its function is as follows. Probable transcription factor involved in the control of specification of mesoderm and endoderm. The polypeptide is Homeobox protein SEBOX (SEBOX) (Homo sapiens (Human)).